The primary structure comprises 444 residues: tRNA modification GTPase MnmE (444 aa).

(6S)-5-formyl-5,6,7,8-tetrahydrofolate contacts are provided by Arg-24, Glu-81, and Lys-121. In terms of domain architecture, TrmE-type G spans 218–368 (GLTVVIAGPP…LLDALVGFAR (151 aa)). GTP is bound by residues 228 to 233 (NAGKST), 247 to 253 (SPQAGTT), 272 to 275 (DTAG), and 349 to 351 (SAR). Positions 232 and 253 each coordinate Mg(2+). Residue Lys-444 participates in (6S)-5-formyl-5,6,7,8-tetrahydrofolate binding.

The protein belongs to the TRAFAC class TrmE-Era-EngA-EngB-Septin-like GTPase superfamily. TrmE GTPase family. Homodimer. Heterotetramer of two MnmE and two MnmG subunits. It depends on K(+) as a cofactor.

Its subcellular location is the cytoplasm. Its function is as follows. Exhibits a very high intrinsic GTPase hydrolysis rate. Involved in the addition of a carboxymethylaminomethyl (cmnm) group at the wobble position (U34) of certain tRNAs, forming tRNA-cmnm(5)s(2)U34. This Bradyrhizobium sp. (strain ORS 278) protein is tRNA modification GTPase MnmE.